We begin with the raw amino-acid sequence, 513 residues long: Glucose-6-phosphate 1-dehydrogenase 2 (513 aa).

N-acetylalanine is present on Ala2. Ser8 carries the phosphoserine modification. Thr10 carries the phosphothreonine modification. Residues Gly38 to Lys45 and Arg72 each bind NADP(+). Lys89 carries the post-translational modification N6-acetyllysine. NADP(+)-binding residues include Tyr147 and Lys171. D-glucose 6-phosphate is bound by residues Lys171, His201–Lys205, Glu239, and Asp258. The residue at position 171 (Lys171) is an N6-(2-hydroxyisobutyryl)lysine; alternate. Lys171 bears the N6-acetyllysine; alternate mark. His263 serves as the catalytic Proton acceptor. Arg357 serves as a coordination point for NADP(+). 2 residues coordinate D-glucose 6-phosphate: Lys360 and Arg365. Lys366, Arg370, and Arg393 together coordinate NADP(+). Gln395 provides a ligand contact to D-glucose 6-phosphate. Asp421 to Thr423 provides a ligand contact to NADP(+). Residue Lys432 is modified to N6-acetyllysine. Residues Arg487 and Tyr503 each coordinate NADP(+). Tyr503 bears the Phosphotyrosine mark.

This sequence belongs to the glucose-6-phosphate dehydrogenase family. In terms of assembly, homotetramer; dimer of dimers. Interacts with SIRT2; the interaction is enhanced by H(2)O(2) treatment. Post-translationally, acetylated by ELP3; acetylation inhibits its homodimerization and enzyme activity. Deacetylated by SIRT2; deacetylation stimulates its enzyme activity. In terms of tissue distribution, testis.

The protein localises to the cytoplasm. It localises to the cytosol. The protein resides in the membrane. The catalysed reaction is D-glucose 6-phosphate + NADP(+) = 6-phospho-D-glucono-1,5-lactone + NADPH + H(+). The protein operates within carbohydrate degradation; pentose phosphate pathway; D-ribulose 5-phosphate from D-glucose 6-phosphate (oxidative stage): step 1/3. Catalyzes the rate-limiting step of the oxidative pentose-phosphate pathway, which represents a route for the dissimilation of carbohydrates besides glycolysis. The main function of this enzyme is to provide reducing power (NADPH) and pentose phosphates for fatty acid and nucleic acid synthesis. This is Glucose-6-phosphate 1-dehydrogenase 2 (G6pd2) from Mus musculus (Mouse).